Here is a 709-residue protein sequence, read N- to C-terminus: Kelch-like protein 11 (709 aa).

An N-terminal signal peptide occupies residues 1–15 (MAAAVAAAAAAAAAA). One can recognise a BTB domain in the interval 95–171 (CDITLCFGGA…MYTGRIRVST (77 aa)). A BACK domain is found at 206–308 (CVAIHSLAHM…KPTYLTRHVK (103 aa)). 5 Kelch repeats span residues 361–408 (VIMV…ITES), 409–454 (YVYV…EVKG), 456–502 (LYSI…AIED), 504–557 (FVYI…VVNS), and 611–662 (DVFI…HVRI). Position 466 is a phosphoserine (serine 466).

As to quaternary structure, homodimer. Interacts with CUL3. Component of a cullin-RING-based BCR (BTB-CUL3-RBX1) E3 ubiquitin-protein ligase complex.

Its function is as follows. Component of a cullin-RING-based BCR (BTB-CUL3-RBX1) E3 ubiquitin-protein ligase complex that mediates the ubiquitination of target proteins, leading most often to their proteasomal degradation. The polypeptide is Kelch-like protein 11 (Klhl11) (Mus musculus (Mouse)).